We begin with the raw amino-acid sequence, 182 residues long: NADH-quinone oxidoreductase subunit I (182 aa).

4Fe-4S ferredoxin-type domains lie at 52–82 and 92–121; these read LTRD…LQKA and EFFR…LTPD. Positions 62, 65, 68, 72, 101, 104, 107, and 111 each coordinate [4Fe-4S] cluster.

The protein belongs to the complex I 23 kDa subunit family. In terms of assembly, NDH-1 is composed of 13 different subunits. Subunits NuoA, H, J, K, L, M, N constitute the membrane sector of the complex. [4Fe-4S] cluster is required as a cofactor.

Its subcellular location is the cell inner membrane. It carries out the reaction a quinone + NADH + 5 H(+)(in) = a quinol + NAD(+) + 4 H(+)(out). NDH-1 shuttles electrons from NADH, via FMN and iron-sulfur (Fe-S) centers, to quinones in the respiratory chain. The immediate electron acceptor for the enzyme in this species is believed to be ubiquinone. Couples the redox reaction to proton translocation (for every two electrons transferred, four hydrogen ions are translocated across the cytoplasmic membrane), and thus conserves the redox energy in a proton gradient. This chain is NADH-quinone oxidoreductase subunit I, found in Pseudomonas putida (strain ATCC 47054 / DSM 6125 / CFBP 8728 / NCIMB 11950 / KT2440).